A 181-amino-acid polypeptide reads, in one-letter code: ATP synthase subunit delta (181 aa).

The protein belongs to the ATPase delta chain family. In terms of assembly, F-type ATPases have 2 components, F(1) - the catalytic core - and F(0) - the membrane proton channel. F(1) has five subunits: alpha(3), beta(3), gamma(1), delta(1), epsilon(1). F(0) has three main subunits: a(1), b(2) and c(10-14). The alpha and beta chains form an alternating ring which encloses part of the gamma chain. F(1) is attached to F(0) by a central stalk formed by the gamma and epsilon chains, while a peripheral stalk is formed by the delta and b chains.

It localises to the cell membrane. Its function is as follows. F(1)F(0) ATP synthase produces ATP from ADP in the presence of a proton or sodium gradient. F-type ATPases consist of two structural domains, F(1) containing the extramembraneous catalytic core and F(0) containing the membrane proton channel, linked together by a central stalk and a peripheral stalk. During catalysis, ATP synthesis in the catalytic domain of F(1) is coupled via a rotary mechanism of the central stalk subunits to proton translocation. This protein is part of the stalk that links CF(0) to CF(1). It either transmits conformational changes from CF(0) to CF(1) or is implicated in proton conduction. The chain is ATP synthase subunit delta from Clostridioides difficile (strain 630) (Peptoclostridium difficile).